Reading from the N-terminus, the 693-residue chain is MAPWPELENSQPTSEKYTVKADGEQSAKPEKAKETEKDDTGTPITKIELVPSHSTATLIEEPTEVEDPWDLPELKDTGLKWSERDTKGKILCVFQGIGKFILLLVFLYFFVCSLDVLSSAFQLVGGKVAGKFFNNNSIMSNPLAGMVIGVLVTVLVQSSSTSTSIVVSMVASSLLPVHAAIPIIMGANIGTSITNTIVALMQAGDRKEFRRAFAGATVHDFFNWLSVLVLLPLEAATGYLERLTNLVVESFHFKNGEEAPELLKVITDPFTKLIIQLDKSILNQIAMNDESVQNKSMIKIWCKTFTNVTERNVTVPSPENCTSPSLCWTDGLYTWTIKNVTYKENIAKCQHIFVNFNLSDAIVGTILLITSLLILCTCLILIVKLLGSVLRGQVAAVIKKTINTDFPYPFSWVTGYLAILVGAGMTFIVQSSSVFTSAMTPLIGIGVISIQRAYPLTLGANIGTTTTAILAALASPGSTLKSSLQIALCHFFFNISGIILWYPIPFTRLPIRLAKGLGNISSKYRWFAIVYLIVFFLLIPLAVFGLSLIGWPVLVGVASPIVLVILLVVVLKILQSFCPGSLPQKLRSWDFLPFWMRSLEPWDKLITSLTSCFQMRCCCCCRVCCRLCCGLCGCSKCCRCTKCSEDLEEGKDEPVKSPEAFNNLAMDKEAQDGVTKSEVDASGTKIVSSVTAL.

Residues 1-46 (MAPWPELENSQPTSEKYTVKADGEQSAKPEKAKETEKDDTGTPITK) are disordered. At 1–89 (MAPWPELENS…KWSERDTKGK (89 aa)) the chain is on the cytoplasmic side. Positions 17-40 (YTVKADGEQSAKPEKAKETEKDDT) are enriched in basic and acidic residues. A helical transmembrane segment spans residues 90–110 (ILCVFQGIGKFILLLVFLYFF). The Extracellular segment spans residues 111-135 (VCSLDVLSSAFQLVGGKVAGKFFNN). A helical membrane pass occupies residues 136–156 (NSIMSNPLAGMVIGVLVTVLV). The Cytoplasmic portion of the chain corresponds to 157–212 (QSSSTSTSIVVSMVASSLLPVHAAIPIIMGANIGTSITNTIVALMQAGDRKEFRRA). Residues 213 to 233 (FAGATVHDFFNWLSVLVLLPL) traverse the membrane as a helical segment. Residues 234-361 (EAATGYLERL…IFVNFNLSDA (128 aa)) lie on the Extracellular side of the membrane. Cys-302 and Cys-349 form a disulfide bridge. N-linked (GlcNAc...) asparagine glycans are attached at residues Asn-307 and Asn-320. Residues 362-382 (IVGTILLITSLLILCTCLILI) form a helical membrane-spanning segment. Over 383-408 (VKLLGSVLRGQVAAVIKKTINTDFPY) the chain is Cytoplasmic. A helical membrane pass occupies residues 409–429 (PFSWVTGYLAILVGAGMTFIV). Over 430–485 (QSSSVFTSAMTPLIGIGVISIQRAYPLTLGANIGTTTTAILAALASPGSTLKSSLQ) the chain is Extracellular. Residues 486–506 (IALCHFFFNISGIILWYPIPF) traverse the membrane as a helical segment. The Cytoplasmic portion of the chain corresponds to 507-525 (TRLPIRLAKGLGNISSKYR). A helical transmembrane segment spans residues 526-546 (WFAIVYLIVFFLLIPLAVFGL). The Extracellular portion of the chain corresponds to 547 to 550 (SLIG). Residues 551–571 (WPVLVGVASPIVLVILLVVVL) form a helical membrane-spanning segment. Residues 572–693 (KILQSFCPGS…TKIVSSVTAL (122 aa)) lie on the Cytoplasmic side of the membrane.

This sequence belongs to the SLC34A transporter family. In terms of processing, glycosylated.

It localises to the apical cell membrane. It catalyses the reaction 3 Na(+)(out) + phosphate(out) = 3 Na(+)(in) + phosphate(in). In terms of biological role, involved in actively transporting phosphate into cells via Na(+) cotransport. The protein is Sodium-dependent phosphate transport protein 2B (SLC34A2) of Bos taurus (Bovine).